A 101-amino-acid chain; its full sequence is Large ribosomal subunit protein P1 (101 aa).

The tract at residues 65 to 89 is disordered; that stretch reads AAPAAAPAEEPKEEKKEEKKEEDTT. A compositionally biased stretch (basic and acidic residues) spans 73-87; sequence EEPKEEKKEEKKEED.

Belongs to the eukaryotic ribosomal protein P1/P2 family. Part of the 50S ribosomal subunit. Homodimer, it forms part of the ribosomal stalk which helps the ribosome interact with GTP-bound translation factors. Forms a heptameric uL10/P0(P1)2(P1)2(P1)2 complex, where uL10/P0 forms an elongated spine to which the P1 dimers bind in a sequential fashion.

In terms of biological role, forms part of the ribosomal stalk, playing a central role in the interaction of the ribosome with GTP-bound translation factors. This chain is Large ribosomal subunit protein P1, found in Methanothermococcus thermolithotrophicus (Methanococcus thermolithotrophicus).